The chain runs to 83 residues: UPF0346 protein M28_Spy0369 (83 aa).

Belongs to the UPF0346 family.

This chain is UPF0346 protein M28_Spy0369, found in Streptococcus pyogenes serotype M28 (strain MGAS6180).